Reading from the N-terminus, the 428-residue chain is Immunoglobulin superfamily containing leucine-rich repeat protein (428 aa).

Positions 1-18 (MQELHLLWWALLLGLAQA) are cleaved as a signal peptide. Residues 19–50 (CPEPCDCGEKYGFQIADCAYRDLESVPPGFPA) enclose the LRRNT domain. An N-linked (GlcNAc...) asparagine glycan is attached at asparagine 51. 5 LRR repeats span residues 51–72 (NVTTLSLSANRLPGLPEGAFRE), 75–96 (LLQSLWLAHNEIRTVAAGALAS), 99–122 (HLKSLDLSHNLISDFAWSDLHNLS), 123–144 (ALQLLKMDSNELTFIPRDAFRS), and 147–168 (ALRSLQLNHNRLHTLAEGTFTP). The region spanning 180–231 (NPFDCTCGIVWLKTWALTTAVSIPEQDNIACTSPHVLKGTPLSRLPPLPCSA) is the LRRCT domain. The 112-residue stretch at 232–343 (PSVQLSYQPS…GSAESSVDVA (112 aa)) folds into the Ig-like domain. A disulfide bridge connects residues cysteine 257 and cysteine 327. Residue asparagine 309 is glycosylated (N-linked (GlcNAc...) asparagine).

In terms of tissue distribution, expressed in various tissues including retina, heart, skeletal muscle, prostate, ovary, small intestine, thyroid, adrenal cortex, testis, stomach and spinal cord.

It localises to the secreted. This Homo sapiens (Human) protein is Immunoglobulin superfamily containing leucine-rich repeat protein (ISLR).